The primary structure comprises 366 residues: Chorismate synthase (366 aa).

Residues Arg-48 and Arg-54 each coordinate NADP(+). Residues 125-127 (RSS), 242-243 (NA), Gly-287, 302-306 (KPTSS), and Arg-328 each bind FMN.

This sequence belongs to the chorismate synthase family. As to quaternary structure, homotetramer. It depends on FMNH2 as a cofactor.

It carries out the reaction 5-O-(1-carboxyvinyl)-3-phosphoshikimate = chorismate + phosphate. The protein operates within metabolic intermediate biosynthesis; chorismate biosynthesis; chorismate from D-erythrose 4-phosphate and phosphoenolpyruvate: step 7/7. Catalyzes the anti-1,4-elimination of the C-3 phosphate and the C-6 proR hydrogen from 5-enolpyruvylshikimate-3-phosphate (EPSP) to yield chorismate, which is the branch point compound that serves as the starting substrate for the three terminal pathways of aromatic amino acid biosynthesis. This reaction introduces a second double bond into the aromatic ring system. The protein is Chorismate synthase of Rhodospirillum rubrum (strain ATCC 11170 / ATH 1.1.1 / DSM 467 / LMG 4362 / NCIMB 8255 / S1).